Reading from the N-terminus, the 328-residue chain is Gonadotropin-releasing hormone receptor (328 aa).

The Extracellular portion of the chain corresponds to 1 to 38 (MQDDTSSEQNPTHCSAINSSVPLVQGALPTLTLSGKIR). N-linked (GlcNAc...) asparagine glycosylation occurs at Asn18. A helical transmembrane segment spans residues 39–59 (VTVTFFLFLVSTTLNASFLLK). At 60–84 (LQKWTQKKEKGKKLSRMKVLLKHLT) the chain is on the cytoplasmic side. A helical transmembrane segment spans residues 85-105 (LANLLETLIVMPLDGMWNITV). Residues 106–115 (QWYAGELLCK) lie on the Extracellular side of the membrane. A disulfide bond links Cys114 and Cys196. A helical transmembrane segment spans residues 116–136 (ILSYLKLFSMYAPAFMMVVIS). The Cytoplasmic segment spans residues 137-160 (LDRSMAITRPLPVQSNRKLEQSMT). The helical transmembrane segment at 161-181 (GLAWGLSSVLAGPQLYIFKMI) threads the bilayer. At 182-208 (HLENGPGQTEVFSQCVTHCSFPQWWHQ) the chain is on the extracellular side. A helical membrane pass occupies residues 209–229 (AFYNFFTFICLFIIPLLIMLI). The Cytoplasmic segment spans residues 230-271 (CNAKIIFTLTQVLQQDSNKLQLNQSKNNIPRARLRTLKMTVA). A helical transmembrane segment spans residues 272-292 (FAASFIVCWTPYYVLGLWYWF). The Extracellular segment spans residues 293 to 306 (DPGMLHRMSEPVNH). The helical transmembrane segment at 307–327 (FFFLFAFLNPCFDPLIYGYFS) threads the bilayer. Position 328 (Leu328) is a topological domain, cytoplasmic.

This sequence belongs to the G-protein coupled receptor 1 family.

The protein resides in the cell membrane. Receptor for gonadotropin releasing hormone (GnRH) that mediates the action of GnRH to stimulate the secretion of the gonadotropic hormones luteinizing hormone (LH) and follicle-stimulating hormone (FSH). This receptor mediates its action by association with G-proteins that activate a phosphatidylinositol-calcium second messenger system. The protein is Gonadotropin-releasing hormone receptor (GNRHR) of Cavia porcellus (Guinea pig).